Here is a 430-residue protein sequence, read N- to C-terminus: Histidine--tRNA ligase (430 aa).

The protein belongs to the class-II aminoacyl-tRNA synthetase family.

Its subcellular location is the cytoplasm. It catalyses the reaction tRNA(His) + L-histidine + ATP = L-histidyl-tRNA(His) + AMP + diphosphate + H(+). In Metallosphaera sedula (strain ATCC 51363 / DSM 5348 / JCM 9185 / NBRC 15509 / TH2), this protein is Histidine--tRNA ligase.